The following is a 417-amino-acid chain: S-adenosylmethionine synthase (417 aa).

His-16 contacts ATP. A Mg(2+)-binding site is contributed by Asp-18. Residue Glu-44 participates in K(+) binding. 2 residues coordinate L-methionine: Glu-57 and Gln-100. The segment at 100-110 is flexible loop; the sequence is QSPDIAQGVDT. ATP-binding positions include 175 to 177, 251 to 252, Asp-260, 266 to 267, Ala-283, and Lys-287; these read DGK, KF, and RK. Asp-260 provides a ligand contact to L-methionine. Lys-291 contacts L-methionine.

This sequence belongs to the AdoMet synthase family. As to quaternary structure, homotetramer; dimer of dimers. The cofactor is Mg(2+). It depends on K(+) as a cofactor.

It localises to the cytoplasm. It carries out the reaction L-methionine + ATP + H2O = S-adenosyl-L-methionine + phosphate + diphosphate. The protein operates within amino-acid biosynthesis; S-adenosyl-L-methionine biosynthesis; S-adenosyl-L-methionine from L-methionine: step 1/1. Catalyzes the formation of S-adenosylmethionine (AdoMet) from methionine and ATP. The overall synthetic reaction is composed of two sequential steps, AdoMet formation and the subsequent tripolyphosphate hydrolysis which occurs prior to release of AdoMet from the enzyme. The chain is S-adenosylmethionine synthase from Synechococcus elongatus (strain ATCC 33912 / PCC 7942 / FACHB-805) (Anacystis nidulans R2).